Here is a 218-residue protein sequence, read N- to C-terminus: Fibroblast growth factor 15 (218 aa).

The first 25 residues, 1–25, serve as a signal peptide directing secretion; sequence MARKWNGRAVARALVLATLWLAVSG.

This sequence belongs to the heparin-binding growth factors family. Interacts with MALRD1. In terms of tissue distribution, expressed in the developing brain.

It localises to the secreted. In terms of biological role, involved in the suppression of bile acid biosynthesis through down-regulation of CYP7A1 expression. The chain is Fibroblast growth factor 15 (Fgf15) from Mus musculus (Mouse).